The sequence spans 397 residues: Chorismate synthase (397 aa).

Positions 40 and 46 each coordinate NADP(+). Residues 129–131, 257–258, Gly302, 317–321, and Arg343 contribute to the FMN site; these read RSS, QA, and KPISS.

The protein belongs to the chorismate synthase family. As to quaternary structure, homotetramer. FMNH2 is required as a cofactor.

It catalyses the reaction 5-O-(1-carboxyvinyl)-3-phosphoshikimate = chorismate + phosphate. The protein operates within metabolic intermediate biosynthesis; chorismate biosynthesis; chorismate from D-erythrose 4-phosphate and phosphoenolpyruvate: step 7/7. Its function is as follows. Catalyzes the anti-1,4-elimination of the C-3 phosphate and the C-6 proR hydrogen from 5-enolpyruvylshikimate-3-phosphate (EPSP) to yield chorismate, which is the branch point compound that serves as the starting substrate for the three terminal pathways of aromatic amino acid biosynthesis. This reaction introduces a second double bond into the aromatic ring system. This is Chorismate synthase from Pelodictyon phaeoclathratiforme (strain DSM 5477 / BU-1).